We begin with the raw amino-acid sequence, 143 residues long: Nucleoside diphosphate kinase (143 aa).

Positions 11, 59, 87, 93, 104, and 114 each coordinate ATP. His-117 functions as the Pros-phosphohistidine intermediate in the catalytic mechanism.

This sequence belongs to the NDK family. As to quaternary structure, homotetramer. Mg(2+) is required as a cofactor.

It localises to the cytoplasm. The enzyme catalyses a 2'-deoxyribonucleoside 5'-diphosphate + ATP = a 2'-deoxyribonucleoside 5'-triphosphate + ADP. It carries out the reaction a ribonucleoside 5'-diphosphate + ATP = a ribonucleoside 5'-triphosphate + ADP. Major role in the synthesis of nucleoside triphosphates other than ATP. The ATP gamma phosphate is transferred to the NDP beta phosphate via a ping-pong mechanism, using a phosphorylated active-site intermediate. The protein is Nucleoside diphosphate kinase of Nitrosococcus oceani (strain ATCC 19707 / BCRC 17464 / JCM 30415 / NCIMB 11848 / C-107).